The following is a 222-amino-acid chain: Cell division protein FtsQ (222 aa).

Residues 1–5 (MNKKV) lie on the Cytoplasmic side of the membrane. A helical membrane pass occupies residues 6-26 (IAIVVGVVVVLVAILGVVAWF). The Extracellular segment spans residues 27–222 (VPILKVGNIE…ISSPSMVTVR (196 aa)). The region spanning 30 to 98 (LKVGNIEVTG…STITVELTER (69 aa)) is the POTRA domain.

Belongs to the FtsQ/DivIB family. FtsQ subfamily.

Its subcellular location is the cell membrane. In terms of biological role, essential cell division protein. In Corynebacterium glutamicum (strain ATCC 13032 / DSM 20300 / JCM 1318 / BCRC 11384 / CCUG 27702 / LMG 3730 / NBRC 12168 / NCIMB 10025 / NRRL B-2784 / 534), this protein is Cell division protein FtsQ.